The sequence spans 493 residues: Putative glycerol-3-phosphate transporter 5 (493 aa).

12 helical membrane passes run 25–44 (FTFH…ASFH), 83–103 (LGEL…FAGH), 113–133 (FLVF…LGYW), 145–165 (VQIV…SVVG), 185–205 (SVGN…GWGW), 207–227 (FVLP…FLVV), 292–312 (FCLF…PYYL), 328–348 (GILS…AGFI), 352–372 (IKAR…ALIM), 375–395 (VYGS…GLLV), 428–448 (AIID…AGYI), and 452–472 (GWNS…LFLV).

This sequence belongs to the major facilitator superfamily. Organophosphate:Pi antiporter (OPA) (TC 2.A.1.4) family.

The protein resides in the membrane. This chain is Putative glycerol-3-phosphate transporter 5, found in Arabidopsis thaliana (Mouse-ear cress).